The following is a 104-amino-acid chain: Large ribosomal subunit protein bL21 (104 aa).

Belongs to the bacterial ribosomal protein bL21 family. In terms of assembly, part of the 50S ribosomal subunit. Contacts protein L20.

Functionally, this protein binds to 23S rRNA in the presence of protein L20. The protein is Large ribosomal subunit protein bL21 of Pseudomonas putida (strain GB-1).